Here is an 889-residue protein sequence, read N- to C-terminus: Voltage-gated potassium channel KCNC3 (889 aa).

Residues 1 to 80 form an important for normal N-type inactivation region; the sequence is MLSSVCVWSF…CSGLPAVAMG (80 aa). Residues 1-291 are Cytoplasmic-facing; sequence MLSSVCVWSF…EDPYSSRAAR (291 aa). The interval 10–66 is disordered; the sequence is FSGRQGTRKQHSQPAPTPQPPESSPPPLLPPPQQQCAQPGTAASPAGAPLSCGPGGR. Residues 24–42 are compositionally biased toward pro residues; that stretch reads APTPQPPESSPPPLLPPPQ. Positions 159, 165, 186, and 187 each coordinate Zn(2+). Residues 202-231 form a disordered region; sequence DSFEAPDSSGNANANAGGAHDAGLDDEAGA. Residues 211–222 show a composition bias toward low complexity; that stretch reads GNANANAGGAHD. A helical membrane pass occupies residues 292 to 310; the sequence is YVAFASLFFILISITTFCL. A glycan (N-linked (GlcNAc...) asparagine) is linked at Asn321. The chain crosses the membrane as a helical span at residues 352–371; sequence VEGVCVVWFTFEFLMRVTFC. Over 372–380 the chain is Cytoplasmic; the sequence is PDKVEFLKS. A helical membrane pass occupies residues 381–399; sequence SLNIIDCVAILPFYLEVGL. Residues 413–435 form a helical; Voltage-sensor membrane-spanning segment; it reads FLRVVRFVRILRIFKLTRHFVGL. Residues 436 to 448 lie on the Cytoplasmic side of the membrane; the sequence is RVLGHTLRASTNE. A helical membrane pass occupies residues 449–470; sequence FLLLIIFLALGVLIFATMIYYA. 4 residues coordinate K(+): Thr504, Leu505, Gly506, and Tyr507. Residues 504–509 carry the Selectivity filter motif; the sequence is TLGYGD. Residues 519-540 form a helical membrane-spanning segment; it reads LVGALCALAGVLTIAMPVPVIV. The Cytoplasmic segment spans residues 541 to 889; the sequence is NNFGMYYSLA…FPSRHSSPAV (349 aa). Disordered stretches follow at residues 557 to 627, 691 to 834, and 852 to 889; these read PKKK…LLRG, IDQP…PQSL, and TLGFPLSLPPRLATGNGGRECPRDPGLPFPSRHSSPAV. The residue at position 626 (Arg626) is an Omega-N-methylarginine. Ser697 and Ser702 each carry phosphoserine. A compositionally biased stretch (low complexity) spans 748–764; that stretch reads SQAPPASCPTSTPTQQP. A Phosphothreonine modification is found at Thr759. Residues 794–808 are compositionally biased toward basic residues; the sequence is HRSHQPPGKHQRGGR.

This sequence belongs to the potassium channel family. C (Shaw) (TC 1.A.1.2) subfamily. Kv3.3/KCNC3 sub-subfamily. As to quaternary structure, homotetramer. Heterotetramer with KCNC1. Interacts (via C-terminus) with HAX1; this interaction modulates channel gating. Identified in a complex with ACTR3, a subunit of the Arp2/3 complex; this interaction is indirect and depends on the presence of HAX1. N-glycosylated. Detected on Purkinje cells in the cerebellum molecular layer (at protein level).

The protein localises to the cell membrane. The protein resides in the presynaptic cell membrane. It localises to the perikaryon. It is found in the cell projection. Its subcellular location is the axon. The protein localises to the dendrite. The protein resides in the dendritic spine membrane. It localises to the cytoplasm. It is found in the cell cortex. Its subcellular location is the cytoskeleton. The catalysed reaction is K(+)(in) = K(+)(out). Functionally, voltage-gated potassium channel that plays an important role in the rapid repolarization of fast-firing brain neurons. The channel opens in response to the voltage difference across the membrane, forming a potassium-selective channel through which potassium ions pass in accordance with their electrochemical gradient. The channel displays rapid activation and inactivation kinetics. It plays a role in the regulation of the frequency, shape and duration of action potentials in Purkinje cells. Required for normal survival of cerebellar neurons, probably via its role in regulating the duration and frequency of action potentials that in turn regulate the activity of voltage-gated Ca(2+) channels and cellular Ca(2+) homeostasis. Required for normal motor function. Plays a role in the reorganization of the cortical actin cytoskeleton and the formation of actin veil structures in neuronal growth cones via its interaction with HAX1 and the Arp2/3 complex. The chain is Voltage-gated potassium channel KCNC3 from Rattus norvegicus (Rat).